A 74-amino-acid polypeptide reads, in one-letter code: Antimicrobial peptide HsAp1 (74 aa).

A signal peptide spans 1–21 (MSRRVILTLVLVTILVKTMAG). A propeptide spanning residues 22–33 (MESKKVETTDEI) is cleaved from the precursor. Proline amide is present on P65. Residues 69-74 (AISEQT) constitute a propeptide that is removed on maturation.

The protein belongs to the non-disulfide-bridged peptide (NDBP) superfamily. Medium-length antimicrobial peptide (group 3) family. Expressed by the venom gland.

Its subcellular location is the secreted. The protein resides in the target cell membrane. In terms of biological role, possesses antimicrobial activity against both Gram-negative (MIC=23.8-51.2 uM) and Gram-positive (MIC=11.8-46.5 uM) bacteria, as well as against the fungus C.tropicalis (MIC=48.6 uM). Also possesses a relatively high hemolytic activity. May act by disrupting the integrity of the bacterial cell membrane. This is Antimicrobial peptide HsAp1 from Heterometrus spinifer (Asia giant forest scorpion).